The chain runs to 425 residues: Tol-Pal system protein TolB (425 aa).

Residues 1–23 form the signal peptide; it reads MQMMKKRILLCLLVGMTCLPVLA.

It belongs to the TolB family. As to quaternary structure, the Tol-Pal system is composed of five core proteins: the inner membrane proteins TolA, TolQ and TolR, the periplasmic protein TolB and the outer membrane protein Pal. They form a network linking the inner and outer membranes and the peptidoglycan layer.

It localises to the periplasm. Functionally, part of the Tol-Pal system, which plays a role in outer membrane invagination during cell division and is important for maintaining outer membrane integrity. The sequence is that of Tol-Pal system protein TolB from Albidiferax ferrireducens (strain ATCC BAA-621 / DSM 15236 / T118) (Rhodoferax ferrireducens).